We begin with the raw amino-acid sequence, 872 residues long: MSSESSAEKGPPPSPAENVQPGVPPAAEEPGMISVDIAGLFYQFSKTFILIFPVYVLGYFGLSFSWLLIALVLLLWWRRNKGNKNSRLYRALAFLENEEKSVKHHIASTDLPAWVHFPDIERAEWLNKTVKHMWPYICQFIEKLFRETIEPAVRGANAHLSTFNFTKIDMGSQPLRINGVKVYTENVDKRQIILDLQISFVGETEIDLEVKRYFCRAGVKSIQLHGTMRVILEPLIGDVPIVGALSIFFLRKPLLEINWTGLTNMLDMPGLNGLSDTIILDIISNYLVLPNRITVPLVSDVQIAQLRFPIPKGVLRIHFLEAQDLMWKDTYMKGLVKGKSDPYGVVRLGNQVFQSKVIKENLNPKWNEVYEALVHEHPGQELEIELFDEDTDKDDFLGSLLIDLVEVEKERVVDEWFSLDEATSGKLHLKLEWLTPNSTTDNLDQVLKSIKADKDQANDGLSSALLILYLDSARSLPNNPLEINHDGMKKAAVEKAKKAGKKIGSSPNPYVLFSVGHAVQESKVKYKTAEPLWEQTFTFFVHNPKRQDLEVEVKDENHQSSMGNLKIPLSQILASEDLTMNQRFHLNNSGPNTSLKMKIALRILHVDKPVRSPDEQHTSQVKRPSIFKGKQPPTPQMPSPSPAVAHKPPPTPKLETNKKPENGNKGTPPSASPKSPTELHQSSSSLSGSSFTYSPSHLPAKEPTPSIASDISLPVATQELRERLRQLQNGTTLGQSPLGQIQLTIRHSSQRNKLMVVVHSCRNLIAFSETGSDPYVRIYLLPDKRRSGRRKTHVYKKTLNPIYDQTFEFSVSLPELQRRTLDIAVKHSGGFLSRDKGLLGKLLLELNTEDAAKGWTQWYDLTEDGTRPAVSS.

The interval Met-1–Pro-25 is disordered. The Cytoplasmic segment spans residues Met-1–Gly-31. Residues Met-32–Phe-52 traverse the membrane as a helical segment. At Pro-53–Tyr-55 the chain is on the lumenal side. A helical transmembrane segment spans residues Val-56–Trp-76. Topologically, residues Trp-77–Ser-872 are cytoplasmic. The region spanning Asp-119–Val-298 is the SMP-LTD domain. C2 domains are found at residues Leu-297–Phe-417 and Asn-442–Asn-588. Ca(2+) contacts are provided by Lys-328, Asp-329, Asp-341, Asp-388, Glu-389, Asp-390, Asp-392, Asp-394, and Asp-395. Basic and acidic residues predominate over residues Lys-608–His-617. The disordered stretch occupies residues Lys-608–Ile-711. The span at Pro-632–Pro-652 shows a compositional bias: pro residues. Positions Asn-664 to Gln-681 are enriched in polar residues. Residues Ser-682–Ser-696 show a composition bias toward low complexity. The C2 3 domain occupies Pro-737–Tyr-859. Residues Lys-784 to Lys-791 are required for phosphatidylinositol 4,5-bisphosphate-dependent location at the cell membrane.

This sequence belongs to the extended synaptotagmin family. As to quaternary structure, interacts with fgfr1 that has been activated by fgf1 binding. Interacts (via C2 domains) with the AP-2 complex (via an alpha subunit). Identified in a complex with the AP-2 complex and fgfr1.

Its subcellular location is the cell membrane. It is found in the endoplasmic reticulum membrane. In terms of biological role, tethers the endoplasmic reticulum to the cell membrane and promotes the formation of appositions between the endoplasmic reticulum and the cell membrane. Binds glycerophospholipids in a barrel-like domain and may play a role in cellular lipid transport. Plays a role in the rapid internalization of fgfr1 that has been activated by fgf1 binding; this occurs most likely via the AP-2 complex. Required for normal fgf signaling and the activation of downstream signaling cascades via its role in the internalization of activated fgfr1. Required for normal embryonic development via its role in fgf signaling and the downstream regulation of t/xBRA expression. The protein is Extended synaptotagmin-2-A (esyt2-a) of Xenopus laevis (African clawed frog).